Here is a 505-residue protein sequence, read N- to C-terminus: Protein nucleotidyltransferase YdiU (505 aa).

ATP is bound by residues Gly102, Gly104, Arg105, Lys125, Asp137, Gly138, Arg188, and Arg195. Catalysis depends on Asp264, which acts as the Proton acceptor. Positions 265 and 274 each coordinate Mg(2+). Asp274 contacts ATP. Residues 485-505 (FADYGKPPAPGEEVQQTFCGT) are disordered.

The protein belongs to the SELO family. It depends on Mg(2+) as a cofactor. Requires Mn(2+) as cofactor.

It carries out the reaction L-seryl-[protein] + ATP = 3-O-(5'-adenylyl)-L-seryl-[protein] + diphosphate. The catalysed reaction is L-threonyl-[protein] + ATP = 3-O-(5'-adenylyl)-L-threonyl-[protein] + diphosphate. The enzyme catalyses L-tyrosyl-[protein] + ATP = O-(5'-adenylyl)-L-tyrosyl-[protein] + diphosphate. It catalyses the reaction L-histidyl-[protein] + UTP = N(tele)-(5'-uridylyl)-L-histidyl-[protein] + diphosphate. It carries out the reaction L-seryl-[protein] + UTP = O-(5'-uridylyl)-L-seryl-[protein] + diphosphate. The catalysed reaction is L-tyrosyl-[protein] + UTP = O-(5'-uridylyl)-L-tyrosyl-[protein] + diphosphate. Nucleotidyltransferase involved in the post-translational modification of proteins. It can catalyze the addition of adenosine monophosphate (AMP) or uridine monophosphate (UMP) to a protein, resulting in modifications known as AMPylation and UMPylation. The protein is Protein nucleotidyltransferase YdiU of Nitrobacter hamburgensis (strain DSM 10229 / NCIMB 13809 / X14).